Here is a 359-residue protein sequence, read N- to C-terminus: Putative plant UBX domain-containing protein 15 (359 aa).

In terms of domain architecture, UBX spans 277–357; it reads DRSVVCSISV…GIANSIISVT (81 aa).

The chain is Putative plant UBX domain-containing protein 15 from Arabidopsis thaliana (Mouse-ear cress).